The primary structure comprises 139 residues: Translation initiation factor 2 subunit beta (139 aa).

It belongs to the eIF-2-beta/eIF-5 family. In terms of assembly, heterotrimer composed of an alpha, a beta and a gamma chain.

Its function is as follows. eIF-2 functions in the early steps of protein synthesis by forming a ternary complex with GTP and initiator tRNA. This chain is Translation initiation factor 2 subunit beta, found in Saccharolobus solfataricus (strain ATCC 35092 / DSM 1617 / JCM 11322 / P2) (Sulfolobus solfataricus).